A 343-amino-acid chain; its full sequence is Probable dual-specificity RNA methyltransferase RlmN (343 aa).

Glutamate 92 (proton acceptor) is an active-site residue. Residues 98–328 (YHHGLTACIS…TTVRREMGAD (231 aa)) enclose the Radical SAM core domain. A disulfide bridge connects residues cysteine 105 and cysteine 333. Residues cysteine 112, cysteine 116, and cysteine 119 each contribute to the [4Fe-4S] cluster site. S-adenosyl-L-methionine contacts are provided by residues 159-160 (GE), serine 191, 214-216 (SLH), and asparagine 290. Cysteine 333 functions as the S-methylcysteine intermediate in the catalytic mechanism.

The protein belongs to the radical SAM superfamily. RlmN family. [4Fe-4S] cluster serves as cofactor.

The protein localises to the cytoplasm. It catalyses the reaction adenosine(2503) in 23S rRNA + 2 reduced [2Fe-2S]-[ferredoxin] + 2 S-adenosyl-L-methionine = 2-methyladenosine(2503) in 23S rRNA + 5'-deoxyadenosine + L-methionine + 2 oxidized [2Fe-2S]-[ferredoxin] + S-adenosyl-L-homocysteine. The enzyme catalyses adenosine(37) in tRNA + 2 reduced [2Fe-2S]-[ferredoxin] + 2 S-adenosyl-L-methionine = 2-methyladenosine(37) in tRNA + 5'-deoxyadenosine + L-methionine + 2 oxidized [2Fe-2S]-[ferredoxin] + S-adenosyl-L-homocysteine. Functionally, specifically methylates position 2 of adenine 2503 in 23S rRNA and position 2 of adenine 37 in tRNAs. This is Probable dual-specificity RNA methyltransferase RlmN from Alkaliphilus oremlandii (strain OhILAs) (Clostridium oremlandii (strain OhILAs)).